An 85-amino-acid chain; its full sequence is Beta-insect depressant toxin BmKITb (85 aa).

Residues 1–21 (MKLFLLLVISASMLIDGLVNA) form the signal peptide. Positions 22–82 (DGYIRGSNGC…TWKSESNTCG (61 aa)) constitute an LCN-type CS-alpha/beta domain. 4 disulfide bridges follow: Cys31/Cys81, Cys35/Cys56, Cys42/Cys63, and Cys46/Cys65. The residue at position 82 (Gly82) is a Glycine amide.

As to expression, expressed by the venom gland.

The protein resides in the secreted. Its function is as follows. Depressant insect beta-toxins cause a transient contraction paralysis followed by a slow flaccid paralysis. They bind voltage-independently at site-4 of sodium channels (Nav) and shift the voltage of activation toward more negative potentials thereby affecting sodium channel activation and promoting spontaneous and repetitive firing. However, this toxin has some characteristics of excitatory toxins such as bursts of activity after the membrane has been hyperpolarized. This toxin is active only on insects. The protein is Beta-insect depressant toxin BmKITb of Olivierus martensii (Manchurian scorpion).